Here is a 212-residue protein sequence, read N- to C-terminus: NAD(P)H-quinone oxidoreductase subunit K, chloroplastic (212 aa).

[4Fe-4S] cluster-binding residues include C43, C44, C108, and C139.

It belongs to the complex I 20 kDa subunit family. As to quaternary structure, NDH is composed of at least 16 different subunits, 5 of which are encoded in the nucleus. [4Fe-4S] cluster serves as cofactor.

The protein localises to the plastid. It is found in the chloroplast thylakoid membrane. It catalyses the reaction a plastoquinone + NADH + (n+1) H(+)(in) = a plastoquinol + NAD(+) + n H(+)(out). The catalysed reaction is a plastoquinone + NADPH + (n+1) H(+)(in) = a plastoquinol + NADP(+) + n H(+)(out). NDH shuttles electrons from NAD(P)H:plastoquinone, via FMN and iron-sulfur (Fe-S) centers, to quinones in the photosynthetic chain and possibly in a chloroplast respiratory chain. The immediate electron acceptor for the enzyme in this species is believed to be plastoquinone. Couples the redox reaction to proton translocation, and thus conserves the redox energy in a proton gradient. The sequence is that of NAD(P)H-quinone oxidoreductase subunit K, chloroplastic from Phaseolus vulgaris (Kidney bean).